A 307-amino-acid polypeptide reads, in one-letter code: Geranylgeranyl diphosphate synthase (307 aa).

Isopentenyl diphosphate is bound by residues Lys52, Arg55, and His86. Mg(2+) contacts are provided by Asp93 and Asp99. Arg104 is a binding site for (2E,6E)-farnesyl diphosphate. Isopentenyl diphosphate is bound at residue Arg105. (2E,6E)-farnesyl diphosphate is bound by residues Lys188, Thr189, and Gln226.

This sequence belongs to the FPP/GGPP synthase family. Requires Mg(2+) as cofactor.

It catalyses the reaction isopentenyl diphosphate + (2E,6E)-farnesyl diphosphate = (2E,6E,10E)-geranylgeranyl diphosphate + diphosphate. It functions in the pathway isoprenoid biosynthesis; geranylgeranyl diphosphate biosynthesis; geranylgeranyl diphosphate from farnesyl diphosphate and isopentenyl diphosphate: step 1/1. Its function is as follows. Catalyzes the condensation of farnesyl diphosphate (FPP) and isopentenyl diphosphate (IPP) to yield geranylgeranyl diphosphate (GGPP) needed for biosynthesis of carotenoids and diterpenes. This is Geranylgeranyl diphosphate synthase (crtE) from Pseudescherichia vulneris (Escherichia vulneris).